Here is a 331-residue protein sequence, read N- to C-terminus: Holliday junction branch migration complex subunit RuvB (331 aa).

The tract at residues methionine 1–tyrosine 182 is large ATPase domain (RuvB-L). Residues leucine 21, arginine 22, glycine 63, lysine 66, threonine 67, threonine 68, glutamate 129–tyrosine 131, arginine 172, tyrosine 182, and arginine 219 each bind ATP. Mg(2+) is bound at residue threonine 67. Positions serine 183–glycine 254 are small ATPAse domain (RuvB-S). Residues glycine 257 to isoleucine 331 are head domain (RuvB-H). Arginine 310 and arginine 315 together coordinate DNA.

The protein belongs to the RuvB family. In terms of assembly, homohexamer. Forms an RuvA(8)-RuvB(12)-Holliday junction (HJ) complex. HJ DNA is sandwiched between 2 RuvA tetramers; dsDNA enters through RuvA and exits via RuvB. An RuvB hexamer assembles on each DNA strand where it exits the tetramer. Each RuvB hexamer is contacted by two RuvA subunits (via domain III) on 2 adjacent RuvB subunits; this complex drives branch migration. In the full resolvosome a probable DNA-RuvA(4)-RuvB(12)-RuvC(2) complex forms which resolves the HJ.

The protein resides in the cytoplasm. The enzyme catalyses ATP + H2O = ADP + phosphate + H(+). Its function is as follows. The RuvA-RuvB-RuvC complex processes Holliday junction (HJ) DNA during genetic recombination and DNA repair, while the RuvA-RuvB complex plays an important role in the rescue of blocked DNA replication forks via replication fork reversal (RFR). RuvA specifically binds to HJ cruciform DNA, conferring on it an open structure. The RuvB hexamer acts as an ATP-dependent pump, pulling dsDNA into and through the RuvAB complex. RuvB forms 2 homohexamers on either side of HJ DNA bound by 1 or 2 RuvA tetramers; 4 subunits per hexamer contact DNA at a time. Coordinated motions by a converter formed by DNA-disengaged RuvB subunits stimulates ATP hydrolysis and nucleotide exchange. Immobilization of the converter enables RuvB to convert the ATP-contained energy into a lever motion, pulling 2 nucleotides of DNA out of the RuvA tetramer per ATP hydrolyzed, thus driving DNA branch migration. The RuvB motors rotate together with the DNA substrate, which together with the progressing nucleotide cycle form the mechanistic basis for DNA recombination by continuous HJ branch migration. Branch migration allows RuvC to scan DNA until it finds its consensus sequence, where it cleaves and resolves cruciform DNA. This is Holliday junction branch migration complex subunit RuvB from Anaplasma marginale (strain St. Maries).